A 208-amino-acid polypeptide reads, in one-letter code: Methylthioribulose-1-phosphate dehydratase (208 aa).

Zn(2+) is bound by residues H96 and H98.

It belongs to the aldolase class II family. MtnB subfamily. Zn(2+) is required as a cofactor.

The enzyme catalyses 5-(methylsulfanyl)-D-ribulose 1-phosphate = 5-methylsulfanyl-2,3-dioxopentyl phosphate + H2O. The protein operates within amino-acid biosynthesis; L-methionine biosynthesis via salvage pathway; L-methionine from S-methyl-5-thio-alpha-D-ribose 1-phosphate: step 2/6. Catalyzes the dehydration of methylthioribulose-1-phosphate (MTRu-1-P) into 2,3-diketo-5-methylthiopentyl-1-phosphate (DK-MTP-1-P). This is Methylthioribulose-1-phosphate dehydratase from Pseudomonas fluorescens (strain Pf0-1).